Reading from the N-terminus, the 217-residue chain is Small ribosomal subunit protein uS3c (217 aa).

The 75-residue stretch at 43–117 folds into the KH type-2 domain; it reads IKNYVQKNKR…KLNIAITRIA (75 aa).

It belongs to the universal ribosomal protein uS3 family. As to quaternary structure, part of the 30S ribosomal subunit.

It localises to the plastid. Its subcellular location is the chloroplast. The polypeptide is Small ribosomal subunit protein uS3c (rps3) (Platanus occidentalis (Sycamore)).